The primary structure comprises 1209 residues: Protein FAM83H (1209 aa).

Residues 1–286 (MARRSQSSSQ…LFAQSEPLVP (286 aa)) form a DUF1669 region. Positions 1 to 286 (MARRSQSSSQ…LFAQSEPLVP (286 aa)) are mediates interaction with CSNK1A1 and is required for FAM83H activity in keratin cytoskeleton organization. Ser512, Ser513, Ser515, Ser522, Ser639, and Ser660 each carry phosphoserine. Disordered regions lie at residues 512 to 545 (SSAS…NLGQ), 615 to 664 (RDLL…FRSR), and 735 to 760 (KGPA…VVSQ). Thr749 carries the post-translational modification Phosphothreonine. A phosphoserine mark is found at Ser752, Ser778, Ser806, and Ser871. The tract at residues 829 to 1056 (AQGRSLSPQG…EERGSRVRLA (228 aa)) is disordered. A Phosphothreonine modification is found at Thr873. Residues Ser882, Ser893, Ser904, and Ser915 each carry the phosphoserine modification. The segment covering 915–942 (SPTSGFPNRRGSPTTGLMEQKGSPTSTY) has biased composition (polar residues). Thr917 carries the phosphothreonine modification. Position 926 is a phosphoserine (Ser926). Position 928 is a phosphothreonine (Thr928). Phosphoserine occurs at positions 937, 948, 959, 970, 977, 1035, 1041, and 1057. Thr1072 is subject to Phosphothreonine. Disordered regions lie at residues 1076 to 1147 (LEQI…EERD) and 1174 to 1193 (EAGS…RDSK). 3 positions are modified to phosphoserine: Ser1080, Ser1098, and Ser1177.

The protein belongs to the FAM83 family. Directly interacts (via DUF1669) with casein kinase isoforms CSNK1A1, CSNK1A1L, CSNK1D and CSNK1E. Interaction with CSNK1A1 recruits CSNK1A1 to keratin filaments. Interacts with KRT18 and probably other keratins. Expressed in tooth follicle, eye, liver and kidney.

The protein resides in the cytoplasm. It is found in the cytoskeleton. In terms of biological role, may play a major role in the structural organization and calcification of developing enamel. May play a role in keratin cytoskeleton disassembly by recruiting CSNK1A1 to keratin filaments. Thereby, it may regulate epithelial cell migration. This is Protein FAM83H from Mus musculus (Mouse).